Here is a 644-residue protein sequence, read N- to C-terminus: Phosphatidylinositol polyphosphate 5-phosphatase type IV (644 aa).

Residues 1–193 (MPSKAENLRP…RLPSLLPPRP (193 aa)) form a disordered region. 8 consecutive repeat copies span residues 10 to 13 (PSEP), 15 to 18 (PQPP), 28 to 31 (PGAP), 39 to 42 (PPDV), 55 to 58 (PATP), 69 to 71 (PIA), 72 to 74 (PRP), and 75 to 78 (PARP). Positions 10 to 242 (PSEPAPQPPE…SLGPGRPRSP (233 aa)) are 13 X 4 AA repeats of P-X-X-P. The segment covering 78 to 90 (PRLERALSLDDKG) has biased composition (basic and acidic residues). The residue at position 99 (Ser99) is a Phosphoserine. The segment covering 107–118 (NGTSPSRGSVQS) has biased composition (polar residues). Repeat 9 spans residues 121–124 (PGAP). Positions 152–163 (GSPSSGGNPLSG) are enriched in low complexity. A run of 4 repeats spans residues 169 to 172 (PNLP), 183 to 185 (PRL), 190 to 193 (PPRP), and 236 to 239 (PGRP). 2 positions are modified to phosphoserine: Ser241 and Ser256. At Cys641 the chain carries Cysteine methyl ester. Cys641 carries S-farnesyl cysteine lipidation. A propeptide spans 642 to 644 (SVS) (removed in mature form).

Belongs to the inositol polyphosphate 5-phosphatase family. In terms of assembly, interacts (when prenylated) with PDE6D; this is important for normal location in cilia.

The protein localises to the cytoplasm. Its subcellular location is the cytoskeleton. The protein resides in the cilium axoneme. It localises to the golgi apparatus. It is found in the golgi stack membrane. The protein localises to the cell membrane. Its subcellular location is the cell projection. The protein resides in the ruffle. It localises to the nucleus. The enzyme catalyses a 1,2-diacyl-sn-glycero-3-phospho-(1D-myo-inositol-4,5-bisphosphate) + H2O = a 1,2-diacyl-sn-glycero-3-phospho-(1D-myo-inositol 4-phosphate) + phosphate. The catalysed reaction is a 1,2-diacyl-sn-glycero-3-phospho-(1D-myo-inositol-3,4,5-trisphosphate) + H2O = a 1,2-diacyl-sn-glycero-3-phospho-(1D-myo-inositol-3,4-bisphosphate) + phosphate. It carries out the reaction a 1,2-diacyl-sn-glycero-3-phospho-(1D-myo-inositol-3,5-bisphosphate) + H2O = a 1,2-diacyl-sn-glycero-3-phospho-(1D-myo-inositol-3-phosphate) + phosphate. In terms of biological role, phosphatidylinositol (PtdIns) phosphatase that specifically hydrolyzes the 5-phosphate of phosphatidylinositol-3,4,5-trisphosphate (PtdIns(3,4,5)P3), phosphatidylinositol 4,5-bisphosphate(PtdIns(4,5)P2) and phosphatidylinositol 3,5-bisphosphate (PtdIns(3,5)P2). Specific for lipid substrates, inactive towards water soluble inositol phosphates. Plays an essential role in the primary cilium by controlling ciliary growth and phosphoinositide 3-kinase (PI3K) signaling and stability. The sequence is that of Phosphatidylinositol polyphosphate 5-phosphatase type IV (INPP5E) from Pan troglodytes (Chimpanzee).